We begin with the raw amino-acid sequence, 186 residues long: Ribosome-recycling factor (186 aa).

The protein belongs to the RRF family.

It localises to the cytoplasm. Responsible for the release of ribosomes from messenger RNA at the termination of protein biosynthesis. May increase the efficiency of translation by recycling ribosomes from one round of translation to another. The polypeptide is Ribosome-recycling factor (Cupriavidus pinatubonensis (strain JMP 134 / LMG 1197) (Cupriavidus necator (strain JMP 134))).